The sequence spans 511 residues: DEP domain-containing protein 7 (511 aa).

The DEP domain maps to 46-136 (LQTQVEVKKR…SSCSLYRFTT (91 aa)).

It belongs to the DEPDC7 family.

This chain is DEP domain-containing protein 7 (DEPDC7), found in Pongo abelii (Sumatran orangutan).